The chain runs to 198 residues: Endonuclease V (198 aa).

Residues D38 and D101 each contribute to the Mg(2+) site.

This sequence belongs to the endonuclease V family. Mg(2+) serves as cofactor.

It localises to the cytoplasm. It carries out the reaction Endonucleolytic cleavage at apurinic or apyrimidinic sites to products with a 5'-phosphate.. Its function is as follows. DNA repair enzyme involved in the repair of deaminated bases. Selectively cleaves double-stranded DNA at the second phosphodiester bond 3' to a deoxyinosine leaving behind the intact lesion on the nicked DNA. This chain is Endonuclease V, found in Saccharolobus islandicus (strain M.16.27) (Sulfolobus islandicus).